Reading from the N-terminus, the 347-residue chain is G-protein coupled receptor homolog U12 (347 aa).

Transmembrane regions (helical) follow at residues 36-56 (GITL…MILY), 67-87 (FYVI…FFMT), 103-124 (LVYF…IIAT), 147-167 (IGIL…FVKT), 194-214 (IVFS…FYVI), and 236-256 (ILLL…ICEI). Cys-101 and Cys-176 form a disulfide bridge. A disordered region spans residues 321–347 (QKRKDSDASEHDQNSKSKASVEKNQPL). Over residues 322–341 (KRKDSDASEHDQNSKSKASV) the composition is skewed to basic and acidic residues.

This sequence belongs to the G-protein coupled receptor 1 family.

The protein resides in the membrane. Probable G-protein coupled receptor. The sequence is that of G-protein coupled receptor homolog U12 (U12) from Homo sapiens (Human).